Here is a 336-residue protein sequence, read N- to C-terminus: GTP 3',8-cyclase (336 aa).

One can recognise a Radical SAM core domain in the interval 17 to 238; it reads GFSRRFHYLR…WTQQNRNLTD (222 aa). Arg26 lines the GTP pocket. [4Fe-4S] cluster is bound by residues Cys33 and Cys37. Tyr39 contacts S-adenosyl-L-methionine. Cys40 contributes to the [4Fe-4S] cluster binding site. Position 75 (Arg75) interacts with GTP. Gly79 lines the S-adenosyl-L-methionine pocket. Thr106 serves as a coordination point for GTP. Ser130 provides a ligand contact to S-adenosyl-L-methionine. Lys167 provides a ligand contact to GTP. Met201 contacts S-adenosyl-L-methionine. [4Fe-4S] cluster contacts are provided by Cys264 and Cys267. 269–271 lines the GTP pocket; it reads RLR. Cys281 contributes to the [4Fe-4S] cluster binding site.

This sequence belongs to the radical SAM superfamily. MoaA family. In terms of assembly, monomer and homodimer. Requires [4Fe-4S] cluster as cofactor.

The enzyme catalyses GTP + AH2 + S-adenosyl-L-methionine = (8S)-3',8-cyclo-7,8-dihydroguanosine 5'-triphosphate + 5'-deoxyadenosine + L-methionine + A + H(+). The protein operates within cofactor biosynthesis; molybdopterin biosynthesis. Its function is as follows. Catalyzes the cyclization of GTP to (8S)-3',8-cyclo-7,8-dihydroguanosine 5'-triphosphate. This Tolumonas auensis (strain DSM 9187 / NBRC 110442 / TA 4) protein is GTP 3',8-cyclase.